The following is a 313-amino-acid chain: PDCD10 and GCKIII kinases-associated protein 1 (313 aa).

Positions 42–95 are disordered; it reads KGTQNSEVEVPGSTLHSGSLSKPDSSGSTTGLPCQGSLTQEDSEERPCVEKHGI. Low complexity predominate over residues 58–69; that stretch reads SGSLSKPDSSGS. Serine 60 is modified (phosphoserine). Polar residues predominate over residues 70–81; it reads TTGLPCQGSLTQ. Threonine 104 carries the post-translational modification Phosphothreonine. Residues serine 107, serine 237, and serine 240 each carry the phosphoserine modification. The tract at residues 253-288 is disordered; that stretch reads YFKEEDPTQPTPVADPGNEREDPHTYNGNKEGAVVD.

Interacts with KEAP1; this interaction prevents the ubiquitination of KEAP1 by TRIM25, thus protecting KEAP1 from degradation. Found in association with PDCD10 and members of the STE20 kinases, such as STK24, STK25, and STK26.

The protein resides in the cell membrane. Its function is as follows. Acts as a tumor suppressor. Acts as a tumor suppressor for colorectal cancer cell proliferation by targeting KEAP1/USP17/ELK1/CDK6 axis. This is PDCD10 and GCKIII kinases-associated protein 1 from Rattus norvegicus (Rat).